The following is a 434-amino-acid chain: MRFPRIIISSDRSNSGKTLVTAGLIKVLSKRYKVRGYKVGPDFIDPMYHKIASGHPVINLDLWLMGESGVYSSLAKYGKHFDLGIIEGVMGLYDGLYEDYSTYKLSELTHTPLILVINCSNLSSTVGAIVKGLREYRNANVRGVIFNYIASEKHLDYCKKSIPENVEVLGYLPIDKSLSVPSRHLGLYTTEDFKNAKDVINATANLIEMNVDVDKIVEIAEEANELQESNEIEERNVVGKAYVAYDSAFSFYYDENIDILKKRYDVEFFSPLNNDAPADQPSFIYIGGGYPELHLEELENSTKTKDWIKRNVEKGVKLLAECGGFMFLSNEIINEKSYRMIGLYDIQIKAKDKLTIGYTELETEKDNLLSSKGESIRGHEFHVSKAVSVGDVNFAFKNKHGKGIWNGKDGVYVENSLGSYSHFHFSRTRRLLSF.

In terms of domain architecture, GATase cobBQ-type spans Lys-240–Arg-430. Cys-322 serves as the catalytic Nucleophile.

This sequence belongs to the CobB/CbiA family. It depends on Mg(2+) as a cofactor.

The catalysed reaction is cob(II)yrinate + 2 L-glutamine + 2 ATP + 2 H2O = cob(II)yrinate a,c diamide + 2 L-glutamate + 2 ADP + 2 phosphate + 2 H(+). It functions in the pathway cofactor biosynthesis; adenosylcobalamin biosynthesis; cob(II)yrinate a,c-diamide from sirohydrochlorin (anaerobic route): step 10/10. In terms of biological role, catalyzes the ATP-dependent amidation of the two carboxylate groups at positions a and c of cobyrinate, using either L-glutamine or ammonia as the nitrogen source. The protein is Cobyrinate a,c-diamide synthase of Sulfolobus acidocaldarius (strain ATCC 33909 / DSM 639 / JCM 8929 / NBRC 15157 / NCIMB 11770).